The chain runs to 216 residues: MTNITSVNTLVSASKLTCIREERILFDELSFDINAGDIIQIEGPNGAGKTSLLRILAGLSRPYAGQTFYLNEDINRCRDEYNEDLLYLGHLAGVKSELTAEENLNFNLRISGYDDFDTAAILAKVNLAGFEEALAGHLSAGQHRRTALARLWHNDCKVWILDEPFTAIDKKGVEELEQLFIQHADNGGCVILTTHQDMGIIKDDRLRKIRLDYRFV.

Residues Val-11–Val-216 form the ABC transporter domain. Residue Gly-43–Thr-50 participates in ATP binding.

The protein belongs to the ABC transporter superfamily. CcmA exporter (TC 3.A.1.107) family. In terms of assembly, the complex is composed of two ATP-binding proteins (CcmA) and two transmembrane proteins (CcmB).

Its subcellular location is the cell inner membrane. The catalysed reaction is heme b(in) + ATP + H2O = heme b(out) + ADP + phosphate + H(+). Part of the ABC transporter complex CcmAB involved in the biogenesis of c-type cytochromes; once thought to export heme, this seems not to be the case, but its exact role is uncertain. Responsible for energy coupling to the transport system. The protein is Cytochrome c biogenesis ATP-binding export protein CcmA of Shewanella sp. (strain MR-4).